The primary structure comprises 849 residues: MHKHQHCCKCPECYEVTRLAALRRLEPPGYGDWQVPDPYGPSGGNGASSGYGGYSSQTLPSQAGATPTPRTKAKLIPTGRDVGPVPPKPVPGKNTPKLNGSGPSWWPECTCTNRDWYEQASPAPLLVNPEALEPSLSVNGSDGMFKYEEIVLERGNSGLGFSIAGGIDNPHVPDDPGIFITKIIPGGAAAMDGRLGVNDCVLRVNEVDVSEVVHSRAVEALKEAGPVVRLVVRRRQPPPETIMEVNLLKGPKGLGFSIAGGIGNQHIPGDNSIYITKIIEGGAAQKDGRLQIGDRLLAVNNTNLQDVRHEEAVASLKNTSDMVYLKVAKPGSLHLNDMYAPPDYASTFTALADNHISHNSSLGYLGAVESKVTYPAPPQVPPTRYSPIPRHMLAEEDFTREPRKIILHKGSTGLGFNIVGGEDGEGIFVSFILAGGPADLSGELRRGDRILSVNGVNLRNATHEQAAAALKRAGQSVTIVAQYRPEEYSRFESKIHDLREQMMNSSMSSGSGSLRTSEKRSLYVRALFDYDRTRDSCLPSQGLSFSYGDILHVINASDDEWWQARLVTPHGESEQIGVIPSKKRVEKKERARLKTVKFHARTGMIESNRDFPGLSDDYYGAKNLKGVTSNTSDSESSSKGQEDAILSYEPVTRQEIHYARPVIILGPMKDRVNDDLISEFPHKFGSCVPHTTRPRRDNEVDGQDYHFVVSREQMEKDIQDNKFIEAGQFNDNLYGTSIQSVRAVAERGKHCILDVSGNAIKRLQQAQLYPIAIFIKPKSIEALMEMNRRQTYEQANKIFDKAMKLEQEFGEYFTAIVQGDSLEEIYNKIKQIIEDQSGHYIWVPSPEKL.

The disordered stretch occupies residues 32-101; it reads DWQVPDPYGP…GKNTPKLNGS (70 aa). The span at 41–53 shows a compositional bias: gly residues; that stretch reads PSGGNGASSGYGG. Polar residues predominate over residues 57–69; sequence QTLPSQAGATPTP. 3 PDZ domains span residues 149–235, 244–330, and 404–484; these read EIVL…VRRR, EVNL…VAKP, and KIIL…AQYR. Phosphoserine is present on Ser-157. Positions 519-589 constitute an SH3 domain; it reads KRSLYVRALF…PSKKRVEKKE (71 aa). Positions 659-834 constitute a Guanylate kinase-like domain; the sequence is ARPVIILGPM…IYNKIKQIIE (176 aa). Phosphotyrosine is present on Tyr-705.

This sequence belongs to the MAGUK family. As to quaternary structure, interacts through its PDZ domains with NETO1 and APC. Interacts through its first two PDZ domains with ERBB4. Interacts through its third PDZ domain with NLGN1, and probably with NLGN2 and NLGN3. Interacts through its PDZ domains with GRIN2B and SYNGAP1. Interacts through its guanylate kinase-like domain with DLGAP1, DLGAP2, DLGAP3 and DLGAP4. Interacts with FRMPD4 (via C-terminus). Interacts with LRFN2. Interacts with LRFN1 and LRFN4. Interacts with FLTP. Interacts with DGKI (via PDZ-binding motif).

Functionally, required for learning most likely through its role in synaptic plasticity following NMDA receptor signaling. This chain is Disks large homolog 3 (Dlg3), found in Rattus norvegicus (Rat).